The following is a 240-amino-acid chain: RNA transcription, translation and transport factor protein (240 aa).

Belongs to the RTRAF family. As to quaternary structure, homodimer. Component of a tRNA-splicing ligase complex.

It is found in the nucleus. It localises to the cytoplasm. The protein resides in the cytosol. The protein localises to the perinuclear region. Its subcellular location is the cytoskeleton. It is found in the microtubule organizing center. It localises to the centrosome. RNA-binding protein involved in modulation of mRNA transcription by Polymerase II. Component of the tRNA-splicing ligase complex. The sequence is that of RNA transcription, translation and transport factor protein from Xenopus laevis (African clawed frog).